The following is a 633-amino-acid chain: NBPF family member NBPF3 (633 aa).

The disordered stretch occupies residues 15-52 (RGPDVETSPFGAPRAASHGVGRHQELRDPTVPGPTSSA). The stretch at 127 to 186 (LRDERLLTEEKLAEELGQAEELRQYKVLVHSQERELTQLREKLQEGRDASRSLNQHLQAL) forms a coiled coil. Olduvai domains are found at residues 221–313 (ENDD…CIIP), 314–402 (ENES…ATSP), 405–460 (SREL…LDLD), 461–552 (RMKK…PPCP), and 555–633 (NEVL…IFPH). Residues 316–326 (ESDHEQEEEKG) show a composition bias toward basic and acidic residues. The disordered stretch occupies residues 316–370 (ESDHEQEEEKGPVSPRNLQESEEEEAPQESWDEGDWTLSIPPDMSASYQSDRSTF). A compositionally biased stretch (acidic residues) spans 335 to 350 (ESEEEEAPQESWDEGD). The tract at residues 463–484 (KKDQEEEEDQGPPCPRLSRELP) is disordered.

Belongs to the NBPF family. In terms of tissue distribution, expressed in testis and fetal heart, as well as in non small cell lung carcinoma and neuroblastoma cell line.

It is found in the cytoplasm. The polypeptide is NBPF family member NBPF3 (Homo sapiens (Human)).